Reading from the N-terminus, the 116-residue chain is Large ribosomal subunit protein bL20 (116 aa).

This sequence belongs to the bacterial ribosomal protein bL20 family.

Functionally, binds directly to 23S ribosomal RNA and is necessary for the in vitro assembly process of the 50S ribosomal subunit. It is not involved in the protein synthesizing functions of that subunit. In Picosynechococcus sp. (strain ATCC 27264 / PCC 7002 / PR-6) (Agmenellum quadruplicatum), this protein is Large ribosomal subunit protein bL20.